The primary structure comprises 183 residues: Putative 3-methyladenine DNA glycosylase (183 aa).

The protein belongs to the DNA glycosylase MPG family.

The polypeptide is Putative 3-methyladenine DNA glycosylase (Rickettsia peacockii (strain Rustic)).